The sequence spans 728 residues: Catalase-peroxidase (728 aa).

Positions 91-218 form a cross-link, tryptophyl-tyrosyl-methioninium (Trp-Tyr) (with M-244); it reads WHSAGTYRTA…LAAVQMGLIY (128 aa). His-92 functions as the Proton acceptor in the catalytic mechanism. Residues 218-244 constitute a cross-link (tryptophyl-tyrosyl-methioninium (Tyr-Met) (with W-91)); sequence YVNPEGPDGTPDPVAAAHDIRETFARM. His-259 is a binding site for heme b.

This sequence belongs to the peroxidase family. Peroxidase/catalase subfamily. Homodimer or homotetramer. The cofactor is heme b. In terms of processing, formation of the three residue Trp-Tyr-Met cross-link is important for the catalase, but not the peroxidase activity of the enzyme.

The enzyme catalyses H2O2 + AH2 = A + 2 H2O. The catalysed reaction is 2 H2O2 = O2 + 2 H2O. Bifunctional enzyme with both catalase and broad-spectrum peroxidase activity. This Burkholderia lata (strain ATCC 17760 / DSM 23089 / LMG 22485 / NCIMB 9086 / R18194 / 383) protein is Catalase-peroxidase.